The following is a 534-amino-acid chain: Apolipoprotein N-acyltransferase (534 aa).

A run of 7 helical transmembrane segments spans residues 8–28 (VILV…AFAV), 31–51 (LPPF…VWLI), 69–89 (AFAV…WWLG), 105–125 (LAIL…VALA), 127–147 (IFWS…GLME), 178–198 (VIGA…PALF), and 208–228 (VALA…ALYL). One can recognise a CN hydrolase domain in the interval 246-496 (VQPDIDQAAK…TGFIDATVDS (251 aa)). Catalysis depends on Glu-291, which acts as the Proton acceptor. Lys-355 is a catalytic residue. Cys-408 (nucleophile) is an active-site residue. Residues 511 to 531 (FWLTEALLILIALISREGFIF) form a helical membrane-spanning segment.

Belongs to the CN hydrolase family. Apolipoprotein N-acyltransferase subfamily.

Its subcellular location is the cell inner membrane. It carries out the reaction N-terminal S-1,2-diacyl-sn-glyceryl-L-cysteinyl-[lipoprotein] + a glycerophospholipid = N-acyl-S-1,2-diacyl-sn-glyceryl-L-cysteinyl-[lipoprotein] + a 2-acyl-sn-glycero-3-phospholipid + H(+). Its pathway is protein modification; lipoprotein biosynthesis (N-acyl transfer). Its function is as follows. Catalyzes the phospholipid dependent N-acylation of the N-terminal cysteine of apolipoprotein, the last step in lipoprotein maturation. The polypeptide is Apolipoprotein N-acyltransferase (Rhizobium etli (strain CIAT 652)).